The sequence spans 180 residues: Ribulose bisphosphate carboxylase small subunit, chloroplastic 4 (180 aa).

A chloroplast-targeting transit peptide spans 1-56 (MASSIVSSAAVATRANGAQASMVGPFTGLKSTASFPVSRKQNLDITSIASNGGRVR).

It belongs to the RuBisCO small chain family. In terms of assembly, heterohexadecamer of 8 large and 8 small subunits.

It is found in the plastid. The protein localises to the chloroplast. Functionally, ruBisCO catalyzes two reactions: the carboxylation of D-ribulose 1,5-bisphosphate, the primary event in carbon dioxide fixation, as well as the oxidative fragmentation of the pentose substrate. Both reactions occur simultaneously and in competition at the same active site. Although the small subunit is not catalytic it is essential for maximal activity. The chain is Ribulose bisphosphate carboxylase small subunit, chloroplastic 4 from Solanum tuberosum (Potato).